The primary structure comprises 385 residues: 26S proteasome non-ATPase regulatory subunit 13 (385 aa).

One can recognise a PCI domain in the interval 176-347 (EFYKNALMYL…EIIHITWVTP (172 aa)).

This sequence belongs to the proteasome subunit S11 family.

Its function is as follows. Acts as a regulatory subunit of the 26S proteasome which is involved in the ATP-dependent degradation of ubiquitinated proteins. The chain is 26S proteasome non-ATPase regulatory subunit 13 (psmD13) from Dictyostelium discoideum (Social amoeba).